The chain runs to 602 residues: Glutamine--fructose-6-phosphate aminotransferase [isomerizing] (602 aa).

Cys2 serves as the catalytic Nucleophile; for GATase activity. The Glutamine amidotransferase type-2 domain maps to Cys2–Asp219. 2 SIS domains span residues Val280 to Thr420 and Leu453 to Pro592. Lys597 acts as the For Fru-6P isomerization activity in catalysis.

In terms of assembly, homodimer.

It localises to the cytoplasm. The catalysed reaction is D-fructose 6-phosphate + L-glutamine = D-glucosamine 6-phosphate + L-glutamate. Functionally, catalyzes the first step in hexosamine metabolism, converting fructose-6P into glucosamine-6P using glutamine as a nitrogen source. The chain is Glutamine--fructose-6-phosphate aminotransferase [isomerizing] from Thermococcus kodakarensis (strain ATCC BAA-918 / JCM 12380 / KOD1) (Pyrococcus kodakaraensis (strain KOD1)).